The sequence spans 113 residues: MTYIVTDACVRCKFMDCVEVCPVDCFYEGENFLVINPDECIDCGVCEPECPVDAIKPDTEDEADGKWLKINADYAKVWPNITVKGEPPADREDFERETGKFEKYFSEKPGKGS.

4Fe-4S ferredoxin-type domains follow at residues 2–30 (TYIV…YEGE) and 31–60 (NFLV…PDTE). 2 residues coordinate [3Fe-4S] cluster: C9 and C17. Residues C21, C40, C43, and C46 each contribute to the [4Fe-4S] cluster site. C50 is a [3Fe-4S] cluster binding site.

[4Fe-4S] cluster serves as cofactor. Requires [3Fe-4S] cluster as cofactor.

This is Ferredoxin-1 (fdxA) from Caulobacter vibrioides (strain ATCC 19089 / CIP 103742 / CB 15) (Caulobacter crescentus).